The chain runs to 271 residues: 3-methyl-2-oxobutanoate hydroxymethyltransferase (271 aa).

2 residues coordinate Mg(2+): D44 and D83. 3-methyl-2-oxobutanoate-binding positions include 44 to 45 (DS), D83, and K112. Mg(2+) is bound at residue E114. Catalysis depends on E181, which acts as the Proton acceptor.

The protein belongs to the PanB family. In terms of assembly, homodecamer; pentamer of dimers. Mg(2+) is required as a cofactor.

The protein localises to the cytoplasm. The enzyme catalyses 3-methyl-2-oxobutanoate + (6R)-5,10-methylene-5,6,7,8-tetrahydrofolate + H2O = 2-dehydropantoate + (6S)-5,6,7,8-tetrahydrofolate. The protein operates within cofactor biosynthesis; coenzyme A biosynthesis. Its function is as follows. Catalyzes the reversible reaction in which hydroxymethyl group from 5,10-methylenetetrahydrofolate is transferred onto alpha-ketoisovalerate to form ketopantoate. The chain is 3-methyl-2-oxobutanoate hydroxymethyltransferase from Staphylothermus marinus (strain ATCC 43588 / DSM 3639 / JCM 9404 / F1).